The chain runs to 719 residues: Alpha-galactosidase 2 (719 aa).

The Nucleophile role is filled by D472. The active-site Proton donor is D542.

It belongs to the glycosyl hydrolase 36 family.

It catalyses the reaction Hydrolysis of terminal, non-reducing alpha-D-galactose residues in alpha-D-galactosides, including galactose oligosaccharides, galactomannans and galactolipids.. Functionally, alpha-galactosidase associated with the sucrase operon. In Pediococcus pentosaceus, this protein is Alpha-galactosidase 2 (agaS).